The chain runs to 885 residues: MSNTESLNIGKKRGSLTIYIGYSPGVGKTFEMLSNAIELFQSNVDIKIGYIEPHQRDETNALAEQLPKITTNFTKHGSHHFQYLDVDRIIEESPTIVLIDELAHTNISRDRHEKRYMDIEEILNHGIDVHTTLNIQHIESLSSQIELMTGVHVKERVPDYFIMSADVLEVVDISPEQLIKRLKAGKVYKKDRLDVAFSNFFTYAHLSELRTLTLRTVADLMSDKEKVRHNHKTSLKPHIAVAISGSIYNEAVIKEAFHIAQKEHAKFTAIYIDVFEKNRQYKDSQKQVHQHLMLAKSLGAKVKVVYSQTVALGLDEWCKNQDVTKLIIGQHIRNKWRDFFNTPLIDHLMSFEHSYKIEIVPIKQIPVELKMNKSPYRPKGKRFAIDMLKMILIQIICVMMGLWIYQLDKHESSTIILMIFLIGIILLSIWTRSFIIGFLAAIINVFVFNYFFTEPRYTFEVYRFDYPITFIVSILTSILTSALLKQIKFQYSITKKQLYRTDLLFQFNDSIKQTYTVENLLINAGYQINQLLQQSITIYVINQSKVIKTIPLQNHIDNTTQQHEQALSWVIKNERQAGATTDTFPGINKWLIPIGTSPIKGILAIDYQSSQVINPYDASILESMLNELSLAVENVTLLKQTRESMLQAERQLTHSNFLRSISHDIRTPLTTIMGNLDILVSHSKDMSIIEKEQLLVHSFQESQYLYLLVTNILSLTKLQSSNVQIKLQPYLVSELVEEIDMILERRHLKKRITVSSSVNLQFIHIDSKLILQALFNLIENAVKHTSTDTKINLSIRYASYEQIEFAVIDEGPGISLEEQQKIFEPFYTGSNKYFKDNQKESMGLGLYLVQTILHKHQSNLQYKPNQPHGSIFYFNIYTDFNEGDV.

4 consecutive transmembrane segments (helical) span residues Ala-384–Ile-404, Ile-415–Ile-435, Ile-436–Arg-456, and Phe-464–Leu-484. The Histidine kinase domain maps to Ser-660 to Phe-880. The residue at position 663 (His-663) is a Phosphohistidine; by autocatalysis.

The protein resides in the membrane. It carries out the reaction ATP + protein L-histidine = ADP + protein N-phospho-L-histidine.. Its activity is regulated as follows. Cyclic di-AMP is a negative regulator of the Kdp system. In terms of biological role, member of the two-component regulatory system KdpD/KdpE that regulates the transcription of a series of virulence factors through sensing external K(+) concentrations. Also regulates capsular polysaccharide production. May function as a membrane-associated protein kinase that phosphorylates KdpE in response to environmental signals. In turn, KpdE functions as a transcriptional regulator by direct binding to promoter regions of target genes including spa, hla, aur and geh. The polypeptide is Sensor histidine kinase KdpD (Staphylococcus aureus (strain NCTC 8325 / PS 47)).